A 382-amino-acid polypeptide reads, in one-letter code: Alkanesulfonate monooxygenase (382 aa).

Belongs to the SsuD family.

The catalysed reaction is an alkanesulfonate + FMNH2 + O2 = an aldehyde + FMN + sulfite + H2O + 2 H(+). Functionally, catalyzes the desulfonation of aliphatic sulfonates. The polypeptide is Alkanesulfonate monooxygenase (Pseudomonas putida (strain W619)).